We begin with the raw amino-acid sequence, 293 residues long: Bifunctional protein FolD (293 aa).

Residues 166–168 and I232 contribute to the NADP(+) site; that span reads GAS.

This sequence belongs to the tetrahydrofolate dehydrogenase/cyclohydrolase family. As to quaternary structure, homodimer.

It carries out the reaction (6R)-5,10-methylene-5,6,7,8-tetrahydrofolate + NADP(+) = (6R)-5,10-methenyltetrahydrofolate + NADPH. The catalysed reaction is (6R)-5,10-methenyltetrahydrofolate + H2O = (6R)-10-formyltetrahydrofolate + H(+). It functions in the pathway one-carbon metabolism; tetrahydrofolate interconversion. Its function is as follows. Catalyzes the oxidation of 5,10-methylenetetrahydrofolate to 5,10-methenyltetrahydrofolate and then the hydrolysis of 5,10-methenyltetrahydrofolate to 10-formyltetrahydrofolate. The polypeptide is Bifunctional protein FolD (Yersinia enterocolitica serotype O:8 / biotype 1B (strain NCTC 13174 / 8081)).